We begin with the raw amino-acid sequence, 124 residues long: Large ribosomal subunit protein bL19 (124 aa).

This sequence belongs to the bacterial ribosomal protein bL19 family.

Functionally, this protein is located at the 30S-50S ribosomal subunit interface and may play a role in the structure and function of the aminoacyl-tRNA binding site. The polypeptide is Large ribosomal subunit protein bL19 (Orientia tsutsugamushi (strain Boryong) (Rickettsia tsutsugamushi)).